The following is a 993-amino-acid chain: MPFISSAELSSRATPPDLQKRKYGEQSQPSEPKRQKIMGGFLDDDDDDDHDGLEAFNEAQYQSEFEIQEQRVDLPQISQSGSRAEPKRPKIMGGFLDNDDDDDDGLEAFNDAHLESQIDTQEQPVKLTEVSRSQSTLESVVINSVTERSTIVPAYAPPNISPTSVKIKTCNGKALNVPLKKPSARVSYERLIASRSTTAPGRAQKSYYGIDIHSLLNESAKEVKAAEAPKPAPVADVRPSIEAPIGDKRSKKLSTAMWTEKYRARKYTELIGDERTNRSILRWLRGWDPIVYPSLARAKQNKKYNNDEEERPHRKVLLLCGPPGLGKTTLAHVCARQAGYEVLEINASDERSRDVVKGRIRDALGTENVKGMNVELGEQKVRKVGRPVCVVVDEVDGVVSGSGGSGEGGFMKALTDLVLLDQRNSARTSERASDGRKRKGDNFRFLRPLILVCNDVYHASLRPLRQSSVAEIIHVRQAPLENVVSRMKSIFTLEGIPSDSDGVRRLCEASWGLAKRKQRGVRSTGAAEGDIRSVLVAAEWVAHKLRNESSAPLRLTRNWLEQRVLADAGGGSFFKGMNRGGVRDIVDRVFTEGAGFPDVPLGDESLQDPYDRSEAVSVDVANIKKRHAIRRLCEMVDASGDHDRCTSECFSSYPLQPYQDDTFLTKPNAAYDWLHFHDTISSRIYSAHDWELGAYLSQATSAFHLLFATAQGKAQQQYREIDEEEEEAHPFSGPRADYAAFEATKQNQAILSTFQSSFSAPLLRLFRSSNNVATELIPNVIRMLSPDIKPVVVRGSEQKSVASVRKESERALVQSAVRVMTGLGVTFEKVRIENEGGGHGGWAYRMEPPLDALVSFSKVPGFSSATNPVRYAVRQVLDQEYRKESIRKNSENLSSTGSKKSTTKSDDIETPANPAEAAKLKYGTAVKRDFFGRIIQDRVPSPQEDMEQALSRKAKSAQQELSSAGRKVWVTYHDGFSNAVRKPISMAELLSGL.

Disordered stretches follow at residues 1 to 52 (MPFI…DHDG) and 65 to 107 (FEIQ…DGLE). Acidic residues-rich tracts occupy residues 42-51 (LDDDDDDDHD) and 97-106 (DNDDDDDDGL). 321 to 328 (GPPGLGKT) contributes to the ATP binding site. The interval 887-915 (RKNSENLSSTGSKKSTTKSDDIETPANPA) is disordered.

Belongs to the activator 1 small subunits family. CTF18 subfamily.

The protein localises to the nucleus. Its function is as follows. Essential for the fidelity of chromosome transmission. Required for the DNA replication block checkpoint. Replication factor C (RFC) complex has an essential but redundant activity in sister chromatid cohesion establishment. The sequence is that of Chromosome transmission fidelity protein 18 (ctf18) from Emericella nidulans (strain FGSC A4 / ATCC 38163 / CBS 112.46 / NRRL 194 / M139) (Aspergillus nidulans).